An 849-amino-acid chain; its full sequence is Mechanosensitive ion channel protein 7 (849 aa).

The interval 1-49 (MEFRKPFKSHSSYKQIISTGDQNEKTKKKKKLANLDDGDIAKTQSSGSS) is disordered. Positions 9–21 (SHSSYKQIISTGD) are enriched in polar residues. Helical transmembrane passes span 231–251 (AITL…VLSL), 274–294 (LVLI…VFFI), 313–333 (TAVQ…FLFD), 344–364 (VLLL…LWLI), 606–626 (MISF…LEIA), and 642–662 (AFMF…LFII).

It belongs to the MscS (TC 1.A.23) family.

It is found in the membrane. In terms of biological role, mechanosensitive channel that opens in response to stretch forces in the membrane lipid bilayer. This is Mechanosensitive ion channel protein 7 (MSL7) from Arabidopsis thaliana (Mouse-ear cress).